Here is a 361-residue protein sequence, read N- to C-terminus: 3-dehydroquinate synthase (361 aa).

Residues 73 to 78 (DAEAGK), 107 to 111 (GAATD), 131 to 132 (TT), K144, K153, and 171 to 174 (TLET) each bind NAD(+). Positions 186, 249, and 265 each coordinate Zn(2+).

Belongs to the sugar phosphate cyclases superfamily. Dehydroquinate synthase family. NAD(+) serves as cofactor. The cofactor is Co(2+). Requires Zn(2+) as cofactor.

It localises to the cytoplasm. The catalysed reaction is 7-phospho-2-dehydro-3-deoxy-D-arabino-heptonate = 3-dehydroquinate + phosphate. The protein operates within metabolic intermediate biosynthesis; chorismate biosynthesis; chorismate from D-erythrose 4-phosphate and phosphoenolpyruvate: step 2/7. Catalyzes the conversion of 3-deoxy-D-arabino-heptulosonate 7-phosphate (DAHP) to dehydroquinate (DHQ). The chain is 3-dehydroquinate synthase from Mycobacterium leprae (strain TN).